We begin with the raw amino-acid sequence, 399 residues long: Dihydrolipoyllysine-residue succinyltransferase component of 2-oxoglutarate dehydrogenase complex (399 aa).

Residues 2-77 (AIDIKAPTFP…LSGELLGKLT (76 aa)) enclose the Lipoyl-binding domain. An N6-lipoyllysine modification is found at K43. Residues 104–141 (ILSPAARKIAEENAIAADSITGTGKGGRVTKEDAVAAA) enclose the Peripheral subunit-binding (PSBD) domain. Residues H370 and D374 contribute to the active site.

This sequence belongs to the 2-oxoacid dehydrogenase family. In terms of assembly, forms a 24-polypeptide structural core with octahedral symmetry. Part of the 2-oxoglutarate dehydrogenase (OGDH) complex composed of E1 (2-oxoglutarate dehydrogenase), E2 (dihydrolipoamide succinyltransferase) and E3 (dihydrolipoamide dehydrogenase); the complex contains multiple copies of the three enzymatic components (E1, E2 and E3). (R)-lipoate serves as cofactor.

It catalyses the reaction N(6)-[(R)-dihydrolipoyl]-L-lysyl-[protein] + succinyl-CoA = N(6)-[(R)-S(8)-succinyldihydrolipoyl]-L-lysyl-[protein] + CoA. Its pathway is amino-acid degradation; L-lysine degradation via saccharopine pathway; glutaryl-CoA from L-lysine: step 6/6. Its function is as follows. E2 component of the 2-oxoglutarate dehydrogenase (OGDH) complex which catalyzes the second step in the conversion of 2-oxoglutarate to succinyl-CoA and CO(2). The protein is Dihydrolipoyllysine-residue succinyltransferase component of 2-oxoglutarate dehydrogenase complex (sucB) of Azotobacter vinelandii.